Consider the following 324-residue polypeptide: Dermonecrotic toxin Hl-PLD1 (324 aa).

The signal sequence occupies residues 1–35; sequence MAHCYYNSKRGCNRVMKTVALVVLISTVMVEESRG. H50 is a catalytic residue. Positions 70 and 72 each coordinate Mg(2+). The active-site Nucleophile is H86. Cystine bridges form between C90/C96 and C92/C236. A Mg(2+)-binding site is contributed by D130.

Belongs to the arthropod phospholipase D family. Class II subfamily. Requires Mg(2+) as cofactor. In terms of tissue distribution, expressed by the venom gland.

Its subcellular location is the secreted. The enzyme catalyses an N-(acyl)-sphingosylphosphocholine = an N-(acyl)-sphingosyl-1,3-cyclic phosphate + choline. It catalyses the reaction an N-(acyl)-sphingosylphosphoethanolamine = an N-(acyl)-sphingosyl-1,3-cyclic phosphate + ethanolamine. The catalysed reaction is a 1-acyl-sn-glycero-3-phosphocholine = a 1-acyl-sn-glycero-2,3-cyclic phosphate + choline. It carries out the reaction a 1-acyl-sn-glycero-3-phosphoethanolamine = a 1-acyl-sn-glycero-2,3-cyclic phosphate + ethanolamine. In terms of biological role, dermonecrotic toxins cleave the phosphodiester linkage between the phosphate and headgroup of certain phospholipids (sphingolipid and lysolipid substrates), forming an alcohol (often choline) and a cyclic phosphate. This toxin acts on sphingomyelin (SM) with a high activity. It may also act on ceramide phosphoethanolamine (CPE), lysophosphatidylcholine (LPC) and lysophosphatidylethanolamine (LPE), but not on lysophosphatidylserine (LPS), and lysophosphatidylglycerol (LPG). It acts by transphosphatidylation, releasing exclusively cyclic phosphate products as second products. In vivo, shows dermonecrotic activity when intradermally injected into rabbit skin and is lethal to mice. Induces increased vascular permeability, edema, inflammatory response, and platelet aggregation. Does not show hemolytic activity (at up to 50 ug). This is Dermonecrotic toxin Hl-PLD1 from Hemiscorpius lepturus (Scorpion).